We begin with the raw amino-acid sequence, 209 residues long: Large ribosomal subunit protein uL3 (209 aa).

The tract at residues 127-147 (YSRGPMGHGSKSHRVAGARSA) is disordered.

The protein belongs to the universal ribosomal protein uL3 family. As to quaternary structure, part of the 50S ribosomal subunit. Forms a cluster with proteins L14 and L19.

Functionally, one of the primary rRNA binding proteins, it binds directly near the 3'-end of the 23S rRNA, where it nucleates assembly of the 50S subunit. In Finegoldia magna (strain ATCC 29328 / DSM 20472 / WAL 2508) (Peptostreptococcus magnus), this protein is Large ribosomal subunit protein uL3.